The chain runs to 76 residues: Acyl carrier protein (76 aa).

Positions 1-76 (MSIEERVKKI…SAIDYVQNNQ (76 aa)) constitute a Carrier domain. An O-(pantetheine 4'-phosphoryl)serine modification is found at S36.

Belongs to the acyl carrier protein (ACP) family. Post-translationally, 4'-phosphopantetheine is transferred from CoA to a specific serine of apo-ACP by AcpS. This modification is essential for activity because fatty acids are bound in thioester linkage to the sulfhydryl of the prosthetic group.

The protein resides in the cytoplasm. It participates in lipid metabolism; fatty acid biosynthesis. In terms of biological role, carrier of the growing fatty acid chain in fatty acid biosynthesis. The chain is Acyl carrier protein from Haemophilus influenzae (strain 86-028NP).